Here is a 200-residue protein sequence, read N- to C-terminus: Large ribosomal subunit protein uL4 (200 aa).

Positions 42 to 65 (TRAHKSRADVSGGGKKPFRQKGTG) are disordered.

This sequence belongs to the universal ribosomal protein uL4 family. Part of the 50S ribosomal subunit.

In terms of biological role, one of the primary rRNA binding proteins, this protein initially binds near the 5'-end of the 23S rRNA. It is important during the early stages of 50S assembly. It makes multiple contacts with different domains of the 23S rRNA in the assembled 50S subunit and ribosome. Forms part of the polypeptide exit tunnel. The protein is Large ribosomal subunit protein uL4 of Acinetobacter baumannii (strain AB307-0294).